The sequence spans 288 residues: 33 kDa chaperonin (288 aa).

Disulfide bonds link cysteine 235–cysteine 237 and cysteine 268–cysteine 271.

This sequence belongs to the HSP33 family. In terms of processing, under oxidizing conditions two disulfide bonds are formed involving the reactive cysteines. Under reducing conditions zinc is bound to the reactive cysteines and the protein is inactive.

Its subcellular location is the cytoplasm. Functionally, redox regulated molecular chaperone. Protects both thermally unfolding and oxidatively damaged proteins from irreversible aggregation. Plays an important role in the bacterial defense system toward oxidative stress. In Streptococcus thermophilus (strain CNRZ 1066), this protein is 33 kDa chaperonin.